A 333-amino-acid polypeptide reads, in one-letter code: Meiotic drive suppressor wtf9 (333 aa).

The segment at 1-69 (MKNNYTSLKS…ENHSSGTTDN (69 aa)) is disordered. Residues 19–30 (KTDHEIDLEKGP) are compositionally biased toward basic and acidic residues. Transmembrane regions (helical) follow at residues 73-95 (LLIKLLISFTSIILFNAPAVCYL), 108-130 (VEWTLFGFWCFVCTLALIFLTYF), 174-191 (WVVIIWLLWVVICYTLFL), and 204-226 (LICSTCSISAALLLFLLYVRLPF).

This sequence belongs to the WTF family. Homomer. Interacts with other proteins that exhibit high sequence similarity.

It localises to the spore membrane. Its subcellular location is the vacuole membrane. Its function is as follows. Acts as a suppressor component of the dual wtf meiotic drive system, and can suppress but not confer meiotic drive by compatible poisons. Wtf meiotic drive systems promote unequal transmission of alleles from the parental zygote to progeny spores by encoding a poison and an antidote from the same locus; the poison is trans-acting and forms toxic aggregates in all spores within an ascus, wherease the antidote is spore-specific and targets aggregates for degradation by the vacuole. Meiotic drive by wtf systems therefore lead to poisoning of all progeny that do not inherit the dual poison/antidote allele, or express a compatible antidote. This chain is Meiotic drive suppressor wtf9, found in Schizosaccharomyces pombe (strain 972 / ATCC 24843) (Fission yeast).